The following is a 365-amino-acid chain: tRNA-specific 2-thiouridylase MnmA (365 aa).

Residues 6-13 (AMSGGVDS) and L32 each bind ATP. C101 serves as the catalytic Nucleophile. A disulfide bridge connects residues C101 and C199. An ATP-binding site is contributed by G125. Residues 149 to 151 (KDQ) form an interaction with tRNA region. C199 (cysteine persulfide intermediate) is an active-site residue.

It belongs to the MnmA/TRMU family.

The protein localises to the cytoplasm. It carries out the reaction S-sulfanyl-L-cysteinyl-[protein] + uridine(34) in tRNA + AH2 + ATP = 2-thiouridine(34) in tRNA + L-cysteinyl-[protein] + A + AMP + diphosphate + H(+). Its function is as follows. Catalyzes the 2-thiolation of uridine at the wobble position (U34) of tRNA, leading to the formation of s(2)U34. This is tRNA-specific 2-thiouridylase MnmA from Corynebacterium efficiens (strain DSM 44549 / YS-314 / AJ 12310 / JCM 11189 / NBRC 100395).